The sequence spans 226 residues: ATP-dependent dethiobiotin synthetase BioD (226 aa).

Residue Thr-19 coordinates Mg(2+). Residue Lys-40 is part of the active site. Residues Asp-53 and Glu-114 each contribute to the Mg(2+) site. Residues Asp-53, 114–117 (EGAG), and 174–175 (NR) contribute to the ATP site.

It belongs to the dethiobiotin synthetase family. In terms of assembly, homodimer. Mg(2+) is required as a cofactor.

It is found in the cytoplasm. The enzyme catalyses (7R,8S)-7,8-diammoniononanoate + CO2 + ATP = (4R,5S)-dethiobiotin + ADP + phosphate + 3 H(+). The protein operates within cofactor biosynthesis; biotin biosynthesis; biotin from 7,8-diaminononanoate: step 1/2. In terms of biological role, catalyzes a mechanistically unusual reaction, the ATP-dependent insertion of CO2 between the N7 and N8 nitrogen atoms of 7,8-diaminopelargonic acid (DAPA, also called 7,8-diammoniononanoate) to form a ureido ring. This chain is ATP-dependent dethiobiotin synthetase BioD, found in Nitrosospira multiformis (strain ATCC 25196 / NCIMB 11849 / C 71).